The chain runs to 247 residues: tRNA pseudouridine synthase A (247 aa).

The active-site Nucleophile is aspartate 52. Residue tyrosine 111 coordinates substrate.

It belongs to the tRNA pseudouridine synthase TruA family. As to quaternary structure, homodimer.

It catalyses the reaction uridine(38/39/40) in tRNA = pseudouridine(38/39/40) in tRNA. Functionally, formation of pseudouridine at positions 38, 39 and 40 in the anticodon stem and loop of transfer RNAs. In Erythrobacter litoralis (strain HTCC2594), this protein is tRNA pseudouridine synthase A.